Here is a 311-residue protein sequence, read N- to C-terminus: 4-hydroxy-tetrahydrodipicolinate synthase (311 aa).

Thr51 is a binding site for pyruvate. Tyr140 serves as the catalytic Proton donor/acceptor. Lys168 acts as the Schiff-base intermediate with substrate in catalysis. Ile209 serves as a coordination point for pyruvate.

This sequence belongs to the DapA family. As to quaternary structure, homotetramer; dimer of dimers.

The protein localises to the cytoplasm. The enzyme catalyses L-aspartate 4-semialdehyde + pyruvate = (2S,4S)-4-hydroxy-2,3,4,5-tetrahydrodipicolinate + H2O + H(+). Its pathway is amino-acid biosynthesis; L-lysine biosynthesis via DAP pathway; (S)-tetrahydrodipicolinate from L-aspartate: step 3/4. Its function is as follows. Catalyzes the condensation of (S)-aspartate-beta-semialdehyde [(S)-ASA] and pyruvate to 4-hydroxy-tetrahydrodipicolinate (HTPA). The polypeptide is 4-hydroxy-tetrahydrodipicolinate synthase (Streptococcus pneumoniae (strain CGSP14)).